A 437-amino-acid chain; its full sequence is Xylose isomerase (437 aa).

Catalysis depends on residues H101 and D104. Mg(2+) is bound by residues E232, E268, H271, D296, D307, D309, and D339.

It belongs to the xylose isomerase family. Homotetramer. Requires Mg(2+) as cofactor.

Its subcellular location is the cytoplasm. The enzyme catalyses alpha-D-xylose = alpha-D-xylulofuranose. The sequence is that of Xylose isomerase from Mannheimia succiniciproducens (strain KCTC 0769BP / MBEL55E).